We begin with the raw amino-acid sequence, 142 residues long: Large ribosomal subunit protein uL11 (142 aa).

The protein belongs to the universal ribosomal protein uL11 family. As to quaternary structure, part of the ribosomal stalk of the 50S ribosomal subunit. Interacts with L10 and the large rRNA to form the base of the stalk. L10 forms an elongated spine to which L12 dimers bind in a sequential fashion forming a multimeric L10(L12)X complex. In terms of processing, one or more lysine residues are methylated.

Functionally, forms part of the ribosomal stalk which helps the ribosome interact with GTP-bound translation factors. The polypeptide is Large ribosomal subunit protein uL11 (Proteus vulgaris).